A 427-amino-acid polypeptide reads, in one-letter code: Gustatory receptor for sugar taste 43a (427 aa).

Over 1–37 (MEISQPSIGIFYISKVLALAPYATVRNSKGRVEIGRS) the chain is Cytoplasmic. Residues 38–63 (WLFTVYSATLTVVMVFLTYRGLLFDA) traverse the membrane as a helical segment. The Extracellular portion of the chain corresponds to 64–75 (NSEIPVRMKSAT). Beta-D-fructose contacts are provided by Arg70 and Asp83. Residues 76–96 (SKVVTALDVSVVVMAIVSGVY) traverse the membrane as a helical segment. Over 97 to 135 (CGLFSLNDTLELNDRLNKIDNTLNAYNNFRRDRWRALGM) the chain is Cytoplasmic. The chain crosses the membrane as a helical span at residues 136-158 (AAVSLLAISILVGLDVGTWMRIA). Topologically, residues 159 to 168 (QDMNIAQSDT) are extracellular. The helical transmembrane segment at 169 to 193 (ELNVHWYIPFYSLYFILTGLQVNIA) threads the bilayer. Residue Tyr182 participates in beta-D-fructose binding. Residues 194 to 293 (NTAYGLGRRF…CVHLLSNSFG (100 aa)) lie on the Cytoplasmic side of the membrane. A helical membrane pass occupies residues 294 to 316 (IAVLFILVSCLLHLVATAYFLFL). Residue Thr310 participates in beta-D-fructose binding. The Extracellular portion of the chain corresponds to 317–324 (ELLSKRDN). Residues 325–346 (GYLWVQMLWICFHFLRLLMVVE) traverse the membrane as a helical segment. Residue His337 participates in beta-D-fructose binding. Over 347–402 (PCHLAARESRKTIQIVCEIERKVHEPILAEAVKKFWQQLLVVDADFSACGLCRVNR) the chain is Cytoplasmic. The helical transmembrane segment at 403-423 (TILTSFASAIATYLVILIQFQ) threads the bilayer. Gln421 is a binding site for Ca(2+). Residues 424 to 427 (RTNG) lie on the Extracellular side of the membrane.

Belongs to the insect chemoreceptor superfamily. Gustatory receptor (GR) family. Gr21a subfamily. As to quaternary structure, homotetramer. Expressed in the adult labellar chemosensory neurons and in the adult head, abdomen, leg and wing. In larvae, is expressed in taste organs, as well as the brain and the gastrointestinal system.

It localises to the cell membrane. In terms of biological role, gustatory receptor which mediates acceptance or avoidance behavior, depending on its substrates. Gr43a is the main sugar receptor in larvae. Functions as a narrowly tuned fructose receptor in taste neurons but also as a fructose receptor in the brain. Necessary and sufficient to sense hemolymph fructose and promote feeding in hungry flies but suppress feeding in satiated flies. The protein is Gustatory receptor for sugar taste 43a (Gr43a) of Drosophila melanogaster (Fruit fly).